Reading from the N-terminus, the 509-residue chain is tRNA-2-methylthio-N(6)-dimethylallyladenosine synthase (509 aa).

The span at 1 to 15 (MNEQQRLASQQANSS) shows a compositional bias: polar residues. A disordered region spans residues 1–25 (MNEQQRLASQQANSSTKKEEKDYSK). Positions 16-25 (TKKEEKDYSK) are enriched in basic and acidic residues. The MTTase N-terminal domain maps to 66–184 (RKFYIRTYGC…LPYILKDAMF (119 aa)). 6 residues coordinate [4Fe-4S] cluster: Cys-75, Cys-111, Cys-145, Cys-221, Cys-225, and Cys-228. A Radical SAM core domain is found at 207 to 437 (RRGDIKAWVN…NTLVNTLAIE (231 aa)). A TRAM domain is found at 440–503 (SRYKGQIVEV…TWSLNGELVE (64 aa)).

The protein belongs to the methylthiotransferase family. MiaB subfamily. As to quaternary structure, monomer. The cofactor is [4Fe-4S] cluster.

It localises to the cytoplasm. The enzyme catalyses N(6)-dimethylallyladenosine(37) in tRNA + (sulfur carrier)-SH + AH2 + 2 S-adenosyl-L-methionine = 2-methylsulfanyl-N(6)-dimethylallyladenosine(37) in tRNA + (sulfur carrier)-H + 5'-deoxyadenosine + L-methionine + A + S-adenosyl-L-homocysteine + 2 H(+). In terms of biological role, catalyzes the methylthiolation of N6-(dimethylallyl)adenosine (i(6)A), leading to the formation of 2-methylthio-N6-(dimethylallyl)adenosine (ms(2)i(6)A) at position 37 in tRNAs that read codons beginning with uridine. The sequence is that of tRNA-2-methylthio-N(6)-dimethylallyladenosine synthase from Bacillus cereus (strain B4264).